We begin with the raw amino-acid sequence, 439 residues long: MKTETDFFDQATIVVRAGNGGNGAATFRREKYVPRGGPNGGDGGRGGHVYLIADPEYNTLLHFRYQRKFVAENGGHGGKNAMHGRNGTDVYVPVPPGTVVRATIDGVTYSVDLARPGQRLLAARGGRGGLGNIHFATSTRQAPRLAELGEPGQELTLELELKMLADVGLVGFPNAGKSTLLSVISAARPKIAAYPFTTLTPNLGIVEVGLQRFVVADIPGLIEGAHAGVGLGHDFLRHVERTRLLIHIIDAAGVDGRYPWDDYEQINTELRLYQPELAQRKQVVALNKADLPAAQENLPILRERLPVAPEDLFVISAATGEGIEPLLRRVADLLRADPPPQRDPVDPDEPPLQWPLPEVDENAFTIEREGEAFRVRGIKIERLIAMSNLDQDEALDRIQRVLEASGINEALIAAGVQDGDLVRIGRAELVWDDSGQHAL.

Residues 5 to 164 (TDFFDQATIV…LTLELELKML (160 aa)) enclose the Obg domain. The 171-residue stretch at 165-335 (ADVGLVGFPN…LLRRVADLLR (171 aa)) folds into the OBG-type G domain. Residues 171–178 (GFPNAGKS), 196–200 (FTTLT), 217–220 (DIPG), 287–290 (NKAD), and 316–318 (SAA) each bind GTP. 2 residues coordinate Mg(2+): Ser178 and Thr198. One can recognise an OCT domain in the interval 356–433 (LPEVDENAFT…IGRAELVWDD (78 aa)).

This sequence belongs to the TRAFAC class OBG-HflX-like GTPase superfamily. OBG GTPase family. As to quaternary structure, monomer. The cofactor is Mg(2+).

The protein resides in the cytoplasm. Functionally, an essential GTPase which binds GTP, GDP and possibly (p)ppGpp with moderate affinity, with high nucleotide exchange rates and a fairly low GTP hydrolysis rate. Plays a role in control of the cell cycle, stress response, ribosome biogenesis and in those bacteria that undergo differentiation, in morphogenesis control. This is GTPase Obg from Chloroflexus aurantiacus (strain ATCC 29364 / DSM 637 / Y-400-fl).